The sequence spans 445 residues: Histone acetyltransferase of the MYST family 1 (445 aa).

The Tudor-knot domain maps to 60–118 (LEVGTRVMCQWRDGKYHPVKVIERRKNYNGGHNDYEYYVHYTEFNRRLDEWIKLEQLDL). One can recognise an MYST-type HAT domain in the interval 169–440 (TKVKNIATIE…VDVSKMIWTP (272 aa)). The C2HC MYST-type zinc-finger motif lies at 202-227 (LFFCEFCLSFMKRKEQLQRHMRKCDL). At Lys269 the chain carries N6-acetyllysine; by autocatalysis. Acetyl-CoA is bound by residues 312 to 314 (ILT) and 319 to 325 (QRKGYGK). Catalysis depends on Glu345, which acts as the Proton donor/acceptor. Ser349 contacts acetyl-CoA.

It belongs to the MYST (SAS/MOZ) family. In terms of assembly, interacts with MRG1 and MRG2. Component of the NuA4 histone acetyltransferase complex. Post-translationally, autoacetylation at Lys-269 is required for proper function. In terms of tissue distribution, expressed in cotyledons, leaves, stems, roots and, at higher levels in developing flowers, particularly in the anthers and gynoecia. Constitutively expressed in all tissues, predominantly in shoot apical meristem.

It localises to the nucleus. The enzyme catalyses L-lysyl-[protein] + acetyl-CoA = N(6)-acetyl-L-lysyl-[protein] + CoA + H(+). In terms of biological role, histone acetyltransferase which may be involved in transcriptional activation. Acetylates 'Lys-5' of histone H4 (H4K5ac). Essential for gametophyte development. Involved in DNA repair after UV-B exposure. Negative regulator of flowering controlling the H4K5ac levels in the FLC chromatin. This Arabidopsis thaliana (Mouse-ear cress) protein is Histone acetyltransferase of the MYST family 1.